Consider the following 923-residue polypeptide: MERGLPLLCAVLALVLAPAGAFRNDKCGDTIKIESPGYLTSPGYPHSYHPSEKCEWLIQAPDPYQRIMINFNPHFDLEDRDCKYDYVEVFDGENENGHFRGKFCGKIAPPPVVSSGPFLFIKFVSDYETHGAGFSIRYEIFKRGPECSQNYTTPSGVIKSPGFPEKYPNSLECTYIVFVPKMSEIILEFESFDLEPDSNPPGGMFCRYDRLEIWDGFPDVGPHIGRYCGQKTPGRIRSSSGILSMVFYTDSAIAKEGFSANYSVLQSSVSEDFKCMEALGMESGEIHSDQITASSQYSTNWSAERSRLNYPENGWTPGEDSYREWIQVDLGLLRFVTAVGTQGAISKETKKKYYVKTYKIDVSSNGEDWITIKEGNKPVLFQGNTNPTDVVVAVFPKPLITRFVRIKPATWETGISMRFEVYGCKITDYPCSGMLGMVSGLISDSQITSSNQGDRNWMPENIRLVTSRSGWALPPAPHSYINEWLQIDLGEEKIVRGIIIQGGKHRENKVFMRKFKIGYSNNGSDWKMIMDDSKRKAKSFEGNNNYDTPELRTFPALSTRFIRIYPERATHGGLGLRMELLGCEVEAPTAGPTTPNGNLVDECDDDQANCHSGTGDDFQLTGGTTVLATEKPTVIDSTIQSEFPTYGFNCEFGWGSHKTFCHWEHDNHVQLKWSVLTSKTGPIQDHTGDGNFIYSQADENQKGKVARLVSPVVYSQNSAHCMTFWYHMSGSHVGTLRVKLRYQKPEEYDQLVWMAIGHQGDHWKEGRVLLHKSLKLYQVIFEGEIGKGNLGGIAVDDISINNHISQEDCAKPADLDKKNPEIKIDETGSTPGYEGEGEGDKNISRKPGNVLKTLDPILITIIAMSALGVLLGAVCGVVLYCACWHNGMSERNLSALENYNFELVDGVKLKKDKLNTQSTYSEA.

A signal peptide spans 1-21 (MERGLPLLCAVLALVLAPAGA). Topologically, residues 22–856 (FRNDKCGDTI…PGNVLKTLDP (835 aa)) are extracellular. 3 cysteine pairs are disulfide-bonded: cysteine 27/cysteine 54, cysteine 82/cysteine 104, and cysteine 147/cysteine 173. CUB domains are found at residues 27-141 (CGDT…YEIF) and 147-265 (CSQN…YSVL). Asparagine 150 carries N-linked (GlcNAc...) asparagine glycosylation. Positions 195, 209, and 250 each coordinate Ca(2+). The cysteines at positions 206 and 228 are disulfide-linked. 3 N-linked (GlcNAc...) asparagine glycosylation sites follow: asparagine 261, asparagine 300, and asparagine 522. Intrachain disulfides connect cysteine 275–cysteine 424 and cysteine 431–cysteine 583. 2 F5/8 type C domains span residues 275 to 424 (CMEA…VYGC) and 431 to 583 (CSGM…LLGC). An O-linked (Xyl...) (chondroitin sulfate) serine; alternate glycan is attached at serine 612. Serine 612 is a glycosylation site (O-linked (Xyl...) (heparan sulfate) serine; alternate). An MAM domain is found at 645-811 (TYGFNCEFGW…NHISQEDCAK (167 aa)). Residues 820 to 845 (PEIKIDETGSTPGYEGEGEGDKNISR) form a disordered region. Serine 829 is a glycosylation site (O-linked (Xyl...) (chondroitin sulfate) serine). Residue asparagine 842 is glycosylated (N-linked (GlcNAc...) asparagine). Residues 857-879 (ILITIIAMSALGVLLGAVCGVVL) traverse the membrane as a helical segment. Residues 880–923 (YCACWHNGMSERNLSALENYNFELVDGVKLKKDKLNTQSTYSEA) lie on the Cytoplasmic side of the membrane. Residue serine 894 is modified to Phosphoserine.

It belongs to the neuropilin family. Homodimer, and heterodimer with NRP2. Interacts with FER. Interacts with PLXNB1. Interacts with VEGFA. Interacts with ABCB8/MITOSUR in mitochondria. In terms of assembly, (Microbial infection) Interacts with SARS coronavirus-2/SARS-CoV-2 spike protein S1 (via the CendR motif RRAR). As to expression, the expression of isoforms 1 and 2 does not seem to overlap. Expressed in olfactory epithelium (at protein level). Expressed in fibroblasts (at protein level). Expressed by the blood vessels of different tissues. In the developing embryo it is found predominantly in the nervous system. In adult tissues, it is highly expressed in heart and placenta; moderately in lung, liver, skeletal muscle, kidney and pancreas; and low in adult brain. Expressed in the central nervous system, including olfactory related regions such as the olfactory tubercles and paraolfactory gyri. The expression of isoforms 1 and 2 does not seem to overlap. Found in liver hepatocytes, kidney distal and proximal tubules.

Its subcellular location is the secreted. It is found in the mitochondrion membrane. The protein localises to the cell membrane. The protein resides in the cytoplasm. In terms of biological role, cell-surface receptor involved in the development of the cardiovascular system, in angiogenesis, in the formation of certain neuronal circuits and in organogenesis outside the nervous system. Mediates the chemorepulsant activity of semaphorins. Recognizes a C-end rule (CendR) motif R/KXXR/K on its ligands which causes cellular internalization and vascular leakage. It binds to semaphorin 3A, the PLGF-2 isoform of PGF, the VEGF165 isoform of VEGFA and VEGFB. Coexpression with KDR results in increased VEGF165 binding to KDR as well as increased chemotaxis. Regulates VEGF-induced angiogenesis. Binding to VEGFA initiates a signaling pathway needed for motor neuron axon guidance and cell body migration, including for the caudal migration of facial motor neurons from rhombomere 4 to rhombomere 6 during embryonic development. Regulates mitochondrial iron transport via interaction with ABCB8/MITOSUR. (Microbial infection) Acts as a host factor for human coronavirus SARS-CoV-2 infection. Recognizes and binds to CendR motif RRAR on SARS-CoV-2 spike protein S1 which enhances SARS-CoV-2 infection. Its function is as follows. Binds VEGF-165 and may inhibit its binding to cells. May induce apoptosis by sequestering VEGF-165. May bind as well various members of the semaphorin family. Its expression has an averse effect on blood vessel number and integrity. The sequence is that of Neuropilin-1 from Homo sapiens (Human).